We begin with the raw amino-acid sequence, 449 residues long: Glycoprotein endo-alpha-1,2-mannosidase (449 aa).

Residues 1–8 (MIRFRRRT) lie on the Cytoplasmic side of the membrane. Residues 9–29 (CITLSIFIFLVCLIMAGLKHL) traverse the membrane as a helical; Signal-anchor for type II membrane protein segment. The Lumenal segment spans residues 30–449 (RPENAAFGSP…YMKEKEHWLV (420 aa)). The segment at 59 to 449 (DSENHLKGNT…YMKEKEHWLV (391 aa)) is catalytic.

This sequence belongs to the glycosyl hydrolase 99 family.

The protein localises to the golgi apparatus membrane. The enzyme catalyses N-{alpha-Glc-(1-&gt;3)-alpha-Man-(1-&gt;2)-alpha-Man-(1-&gt;2)-alpha-Man-(1-&gt;3)-[alpha-Man-(1-&gt;2)-alpha-Man-(1-&gt;3)-[alpha-Man-(1-&gt;2)-alpha-Man-(1-&gt;6)]-alpha-Man-(1-&gt;6)]-beta-Man-(1-&gt;4)-beta-GlcNAc-(1-&gt;4)-beta-GlcNAc}-L-asparaginyl-[protein] + H2O = alpha-D-glucosyl-(1-&gt;3)-D-mannopyranose + N(4)-{alpha-D-Man-(1-&gt;2)-alpha-D-Man-(1-&gt;3)-[alpha-D-Man-(1-&gt;2)-alpha-D-Man-(1-&gt;3)-[alpha-D-Man-(1-&gt;2)-alpha-D-Man-(1-&gt;6)]-alpha-D-Man-(1-&gt;6)]-beta-D-Man-(1-&gt;4)-beta-D-GlaNAc-(1-&gt;4)-beta-D-GlcNAc}-L-asparaginyl-[protein] (N-glucan mannose isomer 8A1,2,3B1,2). The chain is Glycoprotein endo-alpha-1,2-mannosidase (manea) from Xenopus laevis (African clawed frog).